Consider the following 243-residue polypeptide: uncharacterized protein (243 aa).

Residues 55 to 75 traverse the membrane as a helical segment; sequence IILIILLTIFMVISTLVIAFV.

It is found in the membrane. This is an uncharacterized protein from Rickettsia prowazekii (strain Madrid E).